We begin with the raw amino-acid sequence, 215 residues long: Glutathione S-transferase stcT (215 aa).

The GST N-terminal domain maps to 2–82; sequence PFGTLYTRPF…YDSNTTLLGT (81 aa). Glutathione is bound by residues Lys52 and Glu66. Lys52 is a substrate binding site. Residues 83–211 form the GST C-terminal domain; sequence TGQEYASIIR…PVLAEYEMPI (129 aa).

This sequence belongs to the GST superfamily. Glutathione serves as cofactor.

Its pathway is mycotoxin biosynthesis; sterigmatocystin biosynthesis. Glutathione S-transferase; part of the gene cluster that mediates the biosynthesis of sterigmatocystin (ST), a polyketide-derived furanocoumarin which is part of the most toxic and carcinogenic compounds among the known mycotoxins. The first step in the biosynthesis of sterigmatocystin is the production of hexanoate by the fatty acid synthase (FAS) units stcJ and stcK. The polyketide backbone is assembled by the non-reducing polyketide synthase stcA by condensation of the starter hexanoyl-CoA and 7 malonyl-CoA extender units followed by cyclization and release of norsolorinic acid. Norsolorinic acid is the first stable intermediate in the biosynthesis of sterigmatocystin and is converted into averantin (AVN) by the ketoreductase stcE which reduces the hexanoate ketone to an alcohol. Averantin is then oxidized into 5'-hydroxyaverantin (HAVN) by the cytochrome P450 monooxygenase stcF. 5'-hydroxyaverantin is further converted to 5'-oxyaverantin (OAVN) by the 5'-hydroxyaverantin dehydrogenase stcG. The next step is the conversion of OAVN into averufin (AVF) which is catalyzed by a yet to be identified enzyme. The cytochrome P450 monooxygenase stcB and the flavin-binding monooxygenase stcW are both required for the conversion of averufin to 1-hydroxyversicolorone. The esterase stcI probably catalyzes the formation of versiconal hemiacetal acetate from 1-hydroxyversicolorone. The oxydoreductase stcN then probably catalyzes the biosynthetic step from versiconal to versicolorin B (VERB). The next step is performed by the versicolorin B desaturase stcL to produce versicolorin A (VERA). The ketoreductase stcU and the cytochrome P450 monooxygenase stcS are involved in the conversion of versicolorin A to demethylsterigmatocystin. The Baeyer-Villiger oxidas stcQ and the reductase stcR might be involved in the biosynthetic step from versicolorin A to demethylsterigmatocystin. The final step in the biosynthesis of sterigmatocystin is the methylation of demethylsterigmatocystin catalyzed by the methyltransferase stcP. In Emericella nidulans (strain FGSC A4 / ATCC 38163 / CBS 112.46 / NRRL 194 / M139) (Aspergillus nidulans), this protein is Glutathione S-transferase stcT.